A 680-amino-acid polypeptide reads, in one-letter code: Methionine--tRNA ligase (680 aa).

Residues 15 to 25 carry the 'HIGH' region motif; sequence PYANGSIHLGH. Zn(2+) is bound by residues C146, C149, C159, and C162. The 'KMSKS' region signature appears at 332-336; the sequence is KMSKS. K335 lines the ATP pocket. Residues 579–680 form the tRNA-binding domain; sequence DFAKVDMRIA…EGAQPGMRVM (102 aa).

The protein belongs to the class-I aminoacyl-tRNA synthetase family. MetG type 1 subfamily. In terms of assembly, homodimer. It depends on Zn(2+) as a cofactor.

The protein localises to the cytoplasm. The catalysed reaction is tRNA(Met) + L-methionine + ATP = L-methionyl-tRNA(Met) + AMP + diphosphate. Functionally, is required not only for elongation of protein synthesis but also for the initiation of all mRNA translation through initiator tRNA(fMet) aminoacylation. This Photobacterium profundum (strain SS9) protein is Methionine--tRNA ligase.